Here is a 134-residue protein sequence, read N- to C-terminus: Proline-rich nuclear receptor coactivator 2 (134 aa).

A disordered region spans residues 1–74 (MGGGERYNIP…NNSNWNASLS (74 aa)). Polar residues-rich tracts occupy residues 11–24 (DPQSRNASKNQQQH) and 52–61 (SAVQNGGKTK). Positions 62-74 (SLSNNSNWNASLS) are enriched in low complexity. Residues 94–100 (SEPPSPS) carry the SH3-binding motif.

This sequence belongs to the PNRC family. PNRC2 subfamily. Interacts with UPF1/RENT1; preferentially interacts with hyperphosphorylated form. Interacts with DCP1A. Interacts with many nuclear receptors including ESR1, ESRRA, ESRRG, NR3C1/GR, NR5A1, PGR, TR, RAR and RXR.

Its subcellular location is the nucleus. The protein localises to the cytoplasm. It localises to the P-body. In terms of biological role, involved in nonsense-mediated mRNA decay (NMD) by acting as a bridge between the mRNA decapping complex and the NMD machinery. May act by targeting the NMD machinery to the P-body and recruiting the decapping machinery to aberrant mRNAs. Required for UPF1/RENT1 localization to the P-body. Plays a role in glucocorticoid receptor-mediated mRNA degradation by interacting with the glucocorticoid receptor NR3C1 in a ligand-dependent manner when it is bound to the 5' UTR of target mRNAs and recruiting the RNA helicase UPF1 and the mRNA-decapping enzyme DCP1A, leading to RNA decay. Also acts as a nuclear receptor coactivator. May play a role in controlling the energy balance between energy storage and energy expenditure. The protein is Proline-rich nuclear receptor coactivator 2 (Pnrc2) of Rattus norvegicus (Rat).